We begin with the raw amino-acid sequence, 552 residues long: MRGAILATAAALAGTAMADVAHMRRHGHDSFHQRRAAVAEADATCGCTTEVVTVWGPPTLIPVATPTPSTVTSEAVTTLHSTSTSTVTIVASASTPATSSSPATPKVPLPTPAITNFPSTGVYTIPATTVTVFDTTTVCGATTTELPAGTHTYGGVTTVVETATTVVCPYATVEPSGTTVTSVIKTTTYVCPTPGTYTIAPTTTTVPTSTVVVYPTPAVITPGTYTQPEQTVTVTRTDYTYVCPFTGQNEPTSAPAAPSTTAVPATTTAAVPSTSSAAPSSSSTAPASTGAVGGQMGMTYTPYTKGGDCKDKSSVLSEVANLKSKGFTHVRVYSTDCNSLEYIGEAARTSGLQMIIGVFISSTGVSGAQDQVTAISKWAQWDLVSLIVVGNEAIQNGYCDASTLAGFISSAKSAFQSAGYTGKVTTTEPINVWQAYGSTLCGVCDIIGANIHPFFNADVSADQAGKFVAQEIKVLEGICPGKDVLNLETGWPHAGNANGKAVPGASEQAIAIKSIAQEVGSKSVFFSYFDDLWKEPGQFDVERYWGCIDTFN.

Residues 1 to 18 (MRGAILATAAALAGTAMA) form the signal peptide. The segment at 250–291 (EPTSAPAAPSTTAVPATTTAAVPSTSSAAPSSSSTAPASTGA) is disordered. A compositionally biased stretch (low complexity) spans 251–289 (PTSAPAAPSTTAVPATTTAAVPSTSSAAPSSSSTAPAST). Residue Glu392 is the Proton donor of the active site. Glu488 (nucleophile) is an active-site residue.

The protein belongs to the glycosyl hydrolase 17 family.

The protein resides in the secreted. It localises to the cell wall. It catalyses the reaction Hydrolysis of terminal, non-reducing beta-D-glucosyl residues with release of beta-D-glucose.. Its pathway is glycan metabolism; cellulose degradation. Its function is as follows. Beta-glucosidases are one of a number of cellulolytic enzymes involved in the degradation of cellulosic biomass. Catalyzes the last step releasing glucose from the inhibitory cellobiose. The sequence is that of Probable beta-glucosidase btgE (btgE) from Neosartorya fischeri (strain ATCC 1020 / DSM 3700 / CBS 544.65 / FGSC A1164 / JCM 1740 / NRRL 181 / WB 181) (Aspergillus fischerianus).